A 146-amino-acid polypeptide reads, in one-letter code: Hemoglobin subunit beta (146 aa).

The Globin domain maps to 2–146 (HWTADEKQLI…VAHALALGYH (145 aa)). Positions 63 and 92 each coordinate heme b.

The protein belongs to the globin family. In terms of assembly, heterotetramer of two alpha chains and two beta chains. Red blood cells.

Its function is as follows. Involved in oxygen transport from the lung to the various peripheral tissues. The polypeptide is Hemoglobin subunit beta (HBB) (Chrysemys picta bellii (Western painted turtle)).